Reading from the N-terminus, the 120-residue chain is MSIMRSIMSNRLVRWSREYPELFITWCVMTYTFGVAGYMLGQRGLLVQHEDQVRIPSKNAHPWEDTKSSSGKSDESLDYSYKYYPRGDRSKEPRKAPSAIQYSTFPVKGVSEEVLERFSK.

The helical transmembrane segment at Tyr19–Gly41 threads the bilayer. Residues Ser57–Asp78 are disordered. A compositionally biased stretch (basic and acidic residues) spans His61–Glu75.

The protein localises to the membrane. This is an uncharacterized protein from Schizosaccharomyces pombe (strain 972 / ATCC 24843) (Fission yeast).